The primary structure comprises 141 residues: Cystatin (141 aa).

The first 26 residues, 1 to 26 (MLHSQLPVAAPLRLLCALLLLPSVTM), serve as a signal peptide directing secretion. The Cystatin domain maps to 29–129 (GGLSPRSVTD…CRFQVWSRPW (101 aa)). A Secondary area of contact motif is present at residues 73–77 (QVVTG). Disulfide bonds link Cys-91/Cys-107 and Cys-120/Cys-140.

This sequence belongs to the cystatin family. As to expression, expressed at a low level by the venom gland (at protein level).

The protein resides in the secreted. In terms of biological role, inhibits various C1 cysteine proteases including cathepsin L, papain and cathepsin B. This protein has no toxic activity and its function in the venom is unknown. It may play a role as a housekeeping or regulatory protein. This chain is Cystatin, found in Hoplocephalus stephensii (Stephens's banded snake).